The sequence spans 563 residues: CTP synthase (563 aa).

The tract at residues 1–280 is amidoligase domain; sequence MTKFVFVTGG…DEMICMKLQL (280 aa). Serine 13 serves as a coordination point for CTP. Serine 13 provides a ligand contact to UTP. Residues 14–19 and aspartate 71 each bind ATP; that span reads SLGKGI. Aspartate 71 and glutamate 154 together coordinate Mg(2+). CTP contacts are provided by residues 161-163, 201-206, and lysine 237; these read DIE and KTKPTQ. UTP contacts are provided by residues 201–206 and lysine 237; that span reads KTKPTQ. The 253-residue stretch at 305 to 557 folds into the Glutamine amidotransferase type-1 domain; that stretch reads TIAMAGKYTE…IAAALEHHAA (253 aa). Glycine 366 is a binding site for L-glutamine. The active-site Nucleophile; for glutamine hydrolysis is the cysteine 393. Residues 394–397, glutamate 417, and arginine 483 each bind L-glutamine; that span reads LGMQ. Active-site residues include histidine 530 and glutamate 532.

This sequence belongs to the CTP synthase family. In terms of assembly, homotetramer.

The catalysed reaction is UTP + L-glutamine + ATP + H2O = CTP + L-glutamate + ADP + phosphate + 2 H(+). It carries out the reaction L-glutamine + H2O = L-glutamate + NH4(+). It catalyses the reaction UTP + NH4(+) + ATP = CTP + ADP + phosphate + 2 H(+). It functions in the pathway pyrimidine metabolism; CTP biosynthesis via de novo pathway; CTP from UDP: step 2/2. Allosterically activated by GTP, when glutamine is the substrate; GTP has no effect on the reaction when ammonia is the substrate. The allosteric effector GTP functions by stabilizing the protein conformation that binds the tetrahedral intermediate(s) formed during glutamine hydrolysis. Inhibited by the product CTP, via allosteric rather than competitive inhibition. Catalyzes the ATP-dependent amination of UTP to CTP with either L-glutamine or ammonia as the source of nitrogen. Regulates intracellular CTP levels through interactions with the four ribonucleotide triphosphates. This is CTP synthase from Leptothrix cholodnii (strain ATCC 51168 / LMG 8142 / SP-6) (Leptothrix discophora (strain SP-6)).